The primary structure comprises 227 residues: Fibrillarin-like rRNA/tRNA 2'-O-methyltransferase (227 aa).

S-adenosyl-L-methionine is bound by residues 86 to 87, 105 to 106, 130 to 131, and 150 to 153; these read TT, EF, DA, and DVAQ.

Belongs to the methyltransferase superfamily. Fibrillarin family. As to quaternary structure, interacts with nop5. Component of box C/D small ribonucleoprotein (sRNP) particles that contain rpl7ae, FlpA and nop5, plus a guide RNA.

Functionally, involved in pre-rRNA and tRNA processing. Utilizes the methyl donor S-adenosyl-L-methionine to catalyze the site-specific 2'-hydroxyl methylation of ribose moieties in rRNA and tRNA. Site specificity is provided by a guide RNA that base pairs with the substrate. Methylation occurs at a characteristic distance from the sequence involved in base pairing with the guide RNA. The polypeptide is Fibrillarin-like rRNA/tRNA 2'-O-methyltransferase (Pyrococcus horikoshii (strain ATCC 700860 / DSM 12428 / JCM 9974 / NBRC 100139 / OT-3)).